The primary structure comprises 477 residues: Glycogen synthase (477 aa).

Position 15 (lysine 15) interacts with ADP-alpha-D-glucose.

The protein belongs to the glycosyltransferase 1 family. Bacterial/plant glycogen synthase subfamily.

It catalyses the reaction [(1-&gt;4)-alpha-D-glucosyl](n) + ADP-alpha-D-glucose = [(1-&gt;4)-alpha-D-glucosyl](n+1) + ADP + H(+). It functions in the pathway glycan biosynthesis; glycogen biosynthesis. In terms of biological role, synthesizes alpha-1,4-glucan chains using ADP-glucose. The chain is Glycogen synthase from Shigella sonnei (strain Ss046).